Consider the following 158-residue polypeptide: NAD(P)H-quinone oxidoreductase subunit N (158 aa).

This sequence belongs to the complex I NdhN subunit family. As to quaternary structure, NDH-1 can be composed of about 15 different subunits; different subcomplexes with different compositions have been identified which probably have different functions.

It is found in the cellular thylakoid membrane. It catalyses the reaction a plastoquinone + NADH + (n+1) H(+)(in) = a plastoquinol + NAD(+) + n H(+)(out). The catalysed reaction is a plastoquinone + NADPH + (n+1) H(+)(in) = a plastoquinol + NADP(+) + n H(+)(out). Functionally, NDH-1 shuttles electrons from an unknown electron donor, via FMN and iron-sulfur (Fe-S) centers, to quinones in the respiratory and/or the photosynthetic chain. The immediate electron acceptor for the enzyme in this species is believed to be plastoquinone. Couples the redox reaction to proton translocation, and thus conserves the redox energy in a proton gradient. Cyanobacterial NDH-1 also plays a role in inorganic carbon-concentration. This Prochlorococcus marinus (strain MIT 9301) protein is NAD(P)H-quinone oxidoreductase subunit N.